The chain runs to 217 residues: Probable GTP-binding protein EngB (217 aa).

Residues 33 to 217 (GPTEIAFAGR…RAAIELAVTR (185 aa)) enclose the EngB-type G domain. GTP contacts are provided by residues 41-48 (GRSNVGKS), 68-72 (GRTQE), 95-98 (DMPG), 162-165 (TKTD), and 196-198 (TSS). The Mg(2+) site is built by serine 48 and threonine 70.

Belongs to the TRAFAC class TrmE-Era-EngA-EngB-Septin-like GTPase superfamily. EngB GTPase family. Requires Mg(2+) as cofactor.

Necessary for normal cell division and for the maintenance of normal septation. The polypeptide is Probable GTP-binding protein EngB (Rhizobium meliloti (strain 1021) (Ensifer meliloti)).